The following is a 224-amino-acid chain: Deoxyribose-phosphate aldolase (224 aa).

Aspartate 91 (proton donor/acceptor) is an active-site residue. Catalysis depends on lysine 152, which acts as the Schiff-base intermediate with acetaldehyde. The active-site Proton donor/acceptor is the lysine 181.

The protein belongs to the DeoC/FbaB aldolase family. DeoC type 1 subfamily.

The protein resides in the cytoplasm. It carries out the reaction 2-deoxy-D-ribose 5-phosphate = D-glyceraldehyde 3-phosphate + acetaldehyde. Its pathway is carbohydrate degradation; 2-deoxy-D-ribose 1-phosphate degradation; D-glyceraldehyde 3-phosphate and acetaldehyde from 2-deoxy-alpha-D-ribose 1-phosphate: step 2/2. Its function is as follows. Catalyzes a reversible aldol reaction between acetaldehyde and D-glyceraldehyde 3-phosphate to generate 2-deoxy-D-ribose 5-phosphate. The polypeptide is Deoxyribose-phosphate aldolase (Mycoplasma pneumoniae (strain ATCC 29342 / M129 / Subtype 1) (Mycoplasmoides pneumoniae)).